A 312-amino-acid polypeptide reads, in one-letter code: Olfactory receptor 8G50 (312 aa).

Residues 1–28 are Extracellular-facing; sequence MAYSNQSRVTEFIISGLTNKPELQLPLF. An N-linked (GlcNAc...) asparagine glycan is attached at asparagine 5. Residues 29–49 form a helical membrane-spanning segment; sequence LLFLGIYLFTVLGNLGMIILI. The Cytoplasmic portion of the chain corresponds to 50-56; that stretch reads LLSSHLH. Residues 57–77 form a helical membrane-spanning segment; it reads TPMYFFLSSLSFIDLCYSTII. The Extracellular portion of the chain corresponds to 78–99; the sequence is TPKMLVNFVTTKNVISYQECMT. Cysteine 97 and cysteine 189 form a disulfide bridge. The chain crosses the membrane as a helical span at residues 100 to 120; it reads QLYFFIAFVISECHMLAAMAY. Over 121-143 the chain is Cytoplasmic; sequence DRYVAICNPLLYNVTMSYQVCSW. The chain crosses the membrane as a helical span at residues 144–164; it reads MVGGVYGMGFIGAAIHTFCML. The Extracellular portion of the chain corresponds to 165–204; it reads RVVFCKDNIINHYFCDLFPLMELACSSTYVNEVVLLSLSA. The chain crosses the membrane as a helical span at residues 205–225; it reads FNIFIPTLTILGSYIFIIISI. The Cytoplasmic portion of the chain corresponds to 226–244; the sequence is LRIKSTEGRFKAFSTCSSH. The chain crosses the membrane as a helical span at residues 245-265; that stretch reads FSAVSVFFGSLAFMYLQPFSV. Residues 266 to 274 are Extracellular-facing; that stretch reads SSKDKGKVS. A helical transmembrane segment spans residues 275 to 292; that stretch reads SVFYTTIVPMLNPMIYSL. Topologically, residues 293–312 are cytoplasmic; that stretch reads RNRDVKLALNKLFQKKKFHV.

It belongs to the G-protein coupled receptor 1 family.

It localises to the cell membrane. In terms of biological role, odorant receptor. This chain is Olfactory receptor 8G50, found in Mus musculus (Mouse).